Consider the following 575-residue polypeptide: Phosphoenolpyruvate-protein phosphotransferase (575 aa).

His-189 (tele-phosphohistidine intermediate) is an active-site residue. Residues Arg-296 and Arg-332 each contribute to the phosphoenolpyruvate site. Residues Glu-431 and Asp-455 each coordinate Mg(2+). Phosphoenolpyruvate contacts are provided by residues 454–455 (ND) and Arg-465. Catalysis depends on Cys-502, which acts as the Proton donor.

Belongs to the PEP-utilizing enzyme family. Homodimer. Requires Mg(2+) as cofactor.

The protein localises to the cytoplasm. The catalysed reaction is L-histidyl-[protein] + phosphoenolpyruvate = N(pros)-phospho-L-histidyl-[protein] + pyruvate. General (non sugar-specific) component of the phosphoenolpyruvate-dependent sugar phosphotransferase system (sugar PTS). This major carbohydrate active-transport system catalyzes the phosphorylation of incoming sugar substrates concomitantly with their translocation across the cell membrane. Enzyme I transfers the phosphoryl group from phosphoenolpyruvate (PEP) to the phosphoryl carrier protein (HPr). The polypeptide is Phosphoenolpyruvate-protein phosphotransferase (ptsI) (Salmonella typhimurium (strain LT2 / SGSC1412 / ATCC 700720)).